Consider the following 291-residue polypeptide: tRNA N(3)-cytidine methyltransferase METTL8, mitochondrial (291 aa).

Residues 1–21 (MNMIWRNSISCLRLGKVPHRY) constitute a mitochondrion transit peptide. Residue Lys80 forms a Glycyl lysine isopeptide (Lys-Gly) (interchain with G-Cter in SUMO) linkage. S-adenosyl-L-methionine contacts are provided by Trp89 and Tyr93. A disordered region spans residues 141–187 (FSRMHCPTVPDEKNHYEKSSGSSEGQSKTESDFSNLDSEKHKKGPME). The segment covering 159 to 168 (SSGSSEGQSK) has biased composition (low complexity). Residues Gly204, Asp230, and Asp256 each contribute to the S-adenosyl-L-methionine site.

The protein belongs to the methyltransferase superfamily. METL family. As to quaternary structure, interacts with EP300.

Its subcellular location is the mitochondrion. It catalyses the reaction cytidine(32) in tRNA(Ser) + S-adenosyl-L-methionine = N(3)-methylcytidine(32) in tRNA(Ser) + S-adenosyl-L-homocysteine + H(+). It carries out the reaction cytidine(32) in tRNA(Thr) + S-adenosyl-L-methionine = N(3)-methylcytidine(32) in tRNA(Thr) + S-adenosyl-L-homocysteine + H(+). The catalysed reaction is a cytidine in mRNA + S-adenosyl-L-methionine = an N(3)-methylcytidine in mRNA + S-adenosyl-L-homocysteine + H(+). Its function is as follows. Mitochondrial S-adenosyl-L-methionine-dependent methyltransferase that mediates N(3)-methylcytidine modification of residue 32 of the tRNA anticodon loop of mitochondrial tRNA(Ser)(UCN) and tRNA(Thr). N(3)-methylcytidine methylation modification regulates mitochondrial translation efficiency and is required for activity of the respiratory chain. N(3)-methylcytidine methylation of mitochondrial tRNA(Ser)(UCN) requires the formation of N(6)-dimethylallyladenosine(37) (i6A37) by TRIT1 as prerequisite. May also mediate N(3)-methylcytidine modification of mRNAs. The existence of N(3)-methylcytidine modification on mRNAs is however unclear, and additional evidences are required to confirm the role of the N(3)-methylcytidine-specific mRNA methyltransferase activity of METTL8 in vivo. This Homo sapiens (Human) protein is tRNA N(3)-cytidine methyltransferase METTL8, mitochondrial.